We begin with the raw amino-acid sequence, 310 residues long: DNA damage-repair/toleration protein DRT102 (310 aa).

N-acetylalanine is present on Ala-2. Residues 219–282 (IVRFKAGSVE…HRVKYHEDTE (64 aa)) form the Cupin type-2 domain.

The polypeptide is DNA damage-repair/toleration protein DRT102 (DRT102) (Arabidopsis thaliana (Mouse-ear cress)).